Here is a 300-residue protein sequence, read N- to C-terminus: Bis(5'-nucleosyl)-tetraphosphatase, symmetrical (300 aa).

This sequence belongs to the Ap4A hydrolase family.

It catalyses the reaction P(1),P(4)-bis(5'-adenosyl) tetraphosphate + H2O = 2 ADP + 2 H(+). In terms of biological role, hydrolyzes diadenosine 5',5'''-P1,P4-tetraphosphate to yield ADP. This Pseudomonas syringae pv. tomato (strain ATCC BAA-871 / DC3000) protein is Bis(5'-nucleosyl)-tetraphosphatase, symmetrical.